Consider the following 878-residue polypeptide: NUT family member 2E (878 aa).

Disordered stretches follow at residues 273–324, 417–511, 527–560, 622–757, and 775–878; these read WSQG…DDSC, QKSQ…VPEE, LLGP…PPDP, RLPP…EEEE, and WLPQ…HCSQ. Pro residues-rich tracts occupy residues 278–288 and 427–444; these read PLPPPPPPAAQ and CLPP…PPAP. Composition is skewed to basic and acidic residues over residues 537–551 and 622–631; these read EPEK…KQPQ and RLPPLKEKQH.

It belongs to the NUT family.

This Homo sapiens (Human) protein is NUT family member 2E (NUTM2E).